The following is a 125-amino-acid chain: 14 kDa phosphohistidine phosphatase (125 aa).

An N-acetylalanine modification is found at Ala-2. Residue Lys-21 participates in substrate binding. The active-site Proton acceptor is the His-53. 94–96 (SMG) contributes to the substrate binding site.

As to quaternary structure, monomer.

It localises to the cytoplasm. The enzyme catalyses N(pros)-phospho-L-histidyl-[protein] + H2O = L-histidyl-[protein] + phosphate. It catalyses the reaction N(tele)-phospho-L-histidyl-[protein] + H2O = L-histidyl-[protein] + phosphate. In terms of biological role, exhibits phosphohistidine phosphatase activity. Its function is as follows. May have a significant involvement in neuronal signaling. This chain is 14 kDa phosphohistidine phosphatase (PHPT1), found in Oryctolagus cuniculus (Rabbit).